The following is a 537-amino-acid chain: MGCVQCKDKEATKLTDERETSVSQHAGYRYGSDPTPQHYPSFGVTAIPNYNNFHAPVSQGVTVFGGVNSSSHSGTLRSRGGTGVTLFVALYDYEARSEDDLSFRKGEKFQILNSTEGDWWEARSLTTGGTGYIPSNYVAPVDSIQAEDWYFGKLGRKDAERQLLSNGNPRGTFLIRESETTKGAYSLSIQDWDETKGDHVKHYKIRKLDNGGYYITTRAQFETLQQLVHHYSARAAGLCCRLIVPCHKGMPRLADLSVKTKDVWEIPRESLQLIKRLGNGQFGEVWMGTWNGNTKVAVKTLKPGTMSPESFLEEAQIMKKLRHDKLVQLYAVVSEEPIYIVTEYMSKGSLLDFLKDGEGRGLKLPNLVDMAAQVAAGMAYIERMNYIHRDLRSANILVGDSLVCKIADFGLARLIEDNEYTARQGAKFPIKWTAPEAALYGRFTIKSDVWSFGILLTELVTKGRVPYPGMNNREVLEQVERGYRMPCPQDCPSSLHELMLQCWKRDPEERPTFEYLQAFLEDYFTATEPQYQPGDNL.

The N-myristoyl glycine moiety is linked to residue Gly2. S-palmitoyl cysteine attachment occurs at residues Cys3 and Cys6. Thr12 bears the Phosphothreonine; by PKC mark. The tract at residues 13 to 34 (KLTDERETSVSQHAGYRYGSDP) is disordered. Residues 82 to 143 (TGVTLFVALY…PSNYVAPVDS (62 aa)) form the SH3 domain. The region spanning 149-246 (WYFGKLGRKD…GLCCRLIVPC (98 aa)) is the SH2 domain. Residues 271–524 (LQLIKRLGNG…YLQAFLEDYF (254 aa)) form the Protein kinase domain. Residues 277–285 (LGNGQFGEV) and Lys299 contribute to the ATP site. Asp390 acts as the Proton acceptor in catalysis. Tyr420 carries the phosphotyrosine; by autocatalysis modification. Position 531 is a phosphotyrosine (Tyr531).

The protein belongs to the protein kinase superfamily. Tyr protein kinase family. SRC subfamily. It depends on Mn(2+) as a cofactor. As to expression, widely expressed.

It localises to the cytoplasm. Its subcellular location is the nucleus. It carries out the reaction L-tyrosyl-[protein] + ATP = O-phospho-L-tyrosyl-[protein] + ADP + H(+). Inhibited by phosphorylation of Tyr-531 by leukocyte common antigen and activated by dephosphorylation of this site. Relatively inactive in the unfertilized oocyte, undergoes rapid activation immediately following fertilization. Total activity increases progressively during later development and remains elevated during sphere and epiboly stage. Tyrosine-protein kinase implicated in the control of cell growth. Plays a role in the regulation of intracellular calcium levels. Required in brain development and mature brain function with important roles in the regulation of axon growth, axon guidance, and neurite extension. Role in cntn1-mediated signaling. Required for convergent extension cell movements during gastrulation, acting with yes via rhoa. May be required for epiboly to occur, possibly through its effects in calcium signaling. This Danio rerio (Zebrafish) protein is Tyrosine-protein kinase fyna (fyna).